The primary structure comprises 209 residues: Ribosomal RNA large subunit methyltransferase E (209 aa).

5 residues coordinate S-adenosyl-L-methionine: Gly63, Trp65, Asp83, Asp99, and Asp124. The Proton acceptor role is filled by Lys164.

Belongs to the class I-like SAM-binding methyltransferase superfamily. RNA methyltransferase RlmE family.

Its subcellular location is the cytoplasm. The enzyme catalyses uridine(2552) in 23S rRNA + S-adenosyl-L-methionine = 2'-O-methyluridine(2552) in 23S rRNA + S-adenosyl-L-homocysteine + H(+). Specifically methylates the uridine in position 2552 of 23S rRNA at the 2'-O position of the ribose in the fully assembled 50S ribosomal subunit. This is Ribosomal RNA large subunit methyltransferase E from Shewanella putrefaciens (strain CN-32 / ATCC BAA-453).